Reading from the N-terminus, the 632-residue chain is Biosynthetic arginine decarboxylase (632 aa).

K101 bears the N6-(pyridoxal phosphate)lysine mark. A substrate-binding site is contributed by 281–291 (FDVGGGLGVDY).

The protein belongs to the Orn/Lys/Arg decarboxylase class-II family. SpeA subfamily. Requires Mg(2+) as cofactor. Pyridoxal 5'-phosphate is required as a cofactor.

The catalysed reaction is L-arginine + H(+) = agmatine + CO2. The protein operates within amine and polyamine biosynthesis; agmatine biosynthesis; agmatine from L-arginine: step 1/1. Its function is as follows. Catalyzes the biosynthesis of agmatine from arginine. The sequence is that of Biosynthetic arginine decarboxylase from Salmonella dublin (strain CT_02021853).